Consider the following 112-residue polypeptide: Tyrosine-protein phosphatase 17 (112 aa).

The Tyrosine-protein phosphatase domain occupies 1-112 (WRMIWEHECC…QPHTAGPIVV (112 aa)). Residue Asp-82 coordinates substrate.

The protein belongs to the protein-tyrosine phosphatase family.

It carries out the reaction O-phospho-L-tyrosyl-[protein] + H2O = L-tyrosyl-[protein] + phosphate. In Styela plicata (Wrinkled sea squirt), this protein is Tyrosine-protein phosphatase 17 (STY-17).